Consider the following 213-residue polypeptide: Ribonuclease HII (213 aa).

The RNase H type-2 domain occupies 20-209 (ELVAGVDEVG…VRQAYEALEG (190 aa)). A divalent metal cation is bound by residues aspartate 26, glutamate 27, and aspartate 118.

The protein belongs to the RNase HII family. It depends on Mn(2+) as a cofactor. Mg(2+) is required as a cofactor.

Its subcellular location is the cytoplasm. The catalysed reaction is Endonucleolytic cleavage to 5'-phosphomonoester.. Endonuclease that specifically degrades the RNA of RNA-DNA hybrids. The polypeptide is Ribonuclease HII (Pseudomonas fluorescens (strain Pf0-1)).